We begin with the raw amino-acid sequence, 2351 residues long: Coagulation factor VIII (2351 aa).

An N-terminal signal peptide occupies residues 1–19 (MQIELSTCFFLCLLRFCFS). 2 Plastocyanin-like domains span residues 20–198 (ATRR…LLVC) and 206–348 (EKTQ…VDSC). Residues 20–348 (ATRRYYLGAV…MEAYVKVDSC (329 aa)) form the F5/8 type A 1 domain. Asparagine 60 carries an N-linked (GlcNAc...) asparagine glycan. Cysteine 172 and cysteine 198 form a disulfide bridge. An N-linked (GlcNAc...) asparagine glycan is attached at asparagine 258. Cysteines 267 and 348 form a disulfide. Tyrosine 365 carries the post-translational modification Sulfotyrosine. Plastocyanin-like domains are found at residues 399–573 (KTWV…LLIC) and 583–730 (NQIM…VSSC). Positions 399 to 730 (KTWVHYIAAE…MTALLKVSSC (332 aa)) constitute an F5/8 type A 2 domain. Cysteine 547 and cysteine 573 form a disulfide bridge. Asparagine 601 carries an N-linked (GlcNAc...) asparagine glycan. Residues cysteine 649 and cysteine 730 are joined by a disulfide bond. Residues tyrosine 737, tyrosine 738, and tyrosine 742 each carry the sulfotyrosine modification. A b region spans residues 760-1667 (SFSQNSRHPS…NPPVLKRHQR (908 aa)). Residues asparagine 776, asparagine 803, asparagine 847, and asparagine 919 are each glycosylated (N-linked (GlcNAc...) asparagine). Disordered stretches follow at residues 906 to 928 (STIP…PPSM) and 941 to 961 (FGKK…SEEN). 13 N-linked (GlcNAc...) asparagine glycosylation sites follow: asparagine 962, asparagine 982, asparagine 1020, asparagine 1024, asparagine 1074, asparagine 1085, asparagine 1204, asparagine 1274, asparagine 1278, asparagine 1301, asparagine 1319, asparagine 1431, and asparagine 1461. A sulfotyrosine mark is found at tyrosine 1683 and tyrosine 1699. Plastocyanin-like domains follow at residues 1713–1877 (KTRH…LLVC) and 1887–2040 (GRQV…SNKC). The region spanning 1713-2040 (KTRHYFIAAV…TLFLVYSNKC (328 aa)) is the F5/8 type A 3 domain. N-linked (GlcNAc...) asparagine glycosylation is present at asparagine 1829. 4 cysteine pairs are disulfide-bonded: cysteine 1851-cysteine 1877, cysteine 1918-cysteine 1922, cysteine 2040-cysteine 2188, and cysteine 2193-cysteine 2345. F5/8 type C domains lie at 2040-2188 (CQTP…LMGC) and 2193-2345 (CSMP…VLGC). N-linked (GlcNAc...) asparagine glycosylation occurs at asparagine 2137.

Belongs to the multicopper oxidase family. Interacts with VWF/vWF. vWF binding is essential for the stabilization of F8 in circulation. In terms of processing, sulfation on Tyr-1699 is essential for binding vWF. Post-translationally, proteolytically cleaved by cathepsin CTSG to produce a partially activated form.

The protein localises to the secreted. Its subcellular location is the extracellular space. Functionally, factor VIII, along with calcium and phospholipid, acts as a cofactor for F9/factor IXa when it converts F10/factor X to the activated form, factor Xa. This Homo sapiens (Human) protein is Coagulation factor VIII (F8).